The chain runs to 545 residues: Ribulokinase (545 aa).

Belongs to the ribulokinase family.

The catalysed reaction is D-ribulose + ATP = D-ribulose 5-phosphate + ADP + H(+). The enzyme catalyses L-ribulose + ATP = L-ribulose 5-phosphate + ADP + H(+). The protein operates within carbohydrate degradation; L-arabinose degradation via L-ribulose; D-xylulose 5-phosphate from L-arabinose (bacterial route): step 2/3. The chain is Ribulokinase from Staphylococcus aureus (strain USA300).